A 34-amino-acid chain; its full sequence is Corticostatin-6 (34 aa).

3 cysteine pairs are disulfide-bonded: Cys3–Cys31, Cys5–Cys20, and Cys10–Cys30.

This sequence belongs to the alpha-defensin family. In terms of tissue distribution, lung, spleen, small intestine, pituitary gland, adrenal medulla and plasma.

The protein localises to the secreted. Its function is as follows. Microbicidal activity and inhibits corticotropin (ACTH) stimulated corticosterone production. In Oryctolagus cuniculus (Rabbit), this protein is Corticostatin-6.